The sequence spans 160 residues: Large ribosomal subunit protein uL16 (160 aa).

Positions 138–160 are disordered; sequence KNLEAPSQEKTKNSKKSQEEVKQ.

This sequence belongs to the universal ribosomal protein uL16 family. Part of the 50S ribosomal subunit.

Binds 23S rRNA and is also seen to make contacts with the A and possibly P site tRNAs. This Prochlorococcus marinus (strain MIT 9215) protein is Large ribosomal subunit protein uL16.